The chain runs to 571 residues: Glutamine--tRNA ligase (571 aa).

Positions 35–45 (PEPNGYLHIGH) match the 'HIGH' region motif. Residues 36–38 (EPN) and 42–48 (HIGHAKS) contribute to the ATP site. The L-glutamine site is built by aspartate 68 and tyrosine 213. ATP-binding positions include threonine 232, 262 to 263 (RL), and 270 to 272 (LSK). A 'KMSKS' region motif is present at residues 269–273 (ILSKR).

The protein belongs to the class-I aminoacyl-tRNA synthetase family. In terms of assembly, monomer.

The protein resides in the cytoplasm. The catalysed reaction is tRNA(Gln) + L-glutamine + ATP = L-glutaminyl-tRNA(Gln) + AMP + diphosphate. The sequence is that of Glutamine--tRNA ligase from Buchnera aphidicola subsp. Acyrthosiphon pisum (strain APS) (Acyrthosiphon pisum symbiotic bacterium).